A 229-amino-acid chain; its full sequence is Cytidylate kinase (229 aa).

7–15 (GPAGAGKSS) contacts ATP.

It belongs to the cytidylate kinase family. Type 1 subfamily.

The protein resides in the cytoplasm. It catalyses the reaction CMP + ATP = CDP + ADP. It carries out the reaction dCMP + ATP = dCDP + ADP. This Rhodopirellula baltica (strain DSM 10527 / NCIMB 13988 / SH1) protein is Cytidylate kinase.